The chain runs to 237 residues: Ras-related protein RABA3 (237 aa).

A GTP-binding site is contributed by 35 to 42 (GDSAVGKT). The short motif at 57-65 (SKSTIGVEF) is the Effector region element. GTP contacts are provided by residues 83–87 (DTAGQ), 141–144 (NKAD), and 172–173 (SA). 2 S-geranylgeranyl cysteine lipidation sites follow: C235 and C237. A Cysteine methyl ester modification is found at C237.

It belongs to the small GTPase superfamily. Rab family. Expressed in root tips.

It localises to the endosome membrane. Its subcellular location is the golgi apparatus. The protein resides in the trans-Golgi network membrane. Its function is as follows. Intracellular vesicle trafficking and protein transport. This chain is Ras-related protein RABA3 (RABA3), found in Arabidopsis thaliana (Mouse-ear cress).